Reading from the N-terminus, the 400-residue chain is tRNA(Met) cytidine acetate ligase (400 aa).

ATP is bound by residues 7 to 20 (ITEY…HIYH), Gly102, Asn165, and Arg190.

This sequence belongs to the TmcAL family.

It localises to the cytoplasm. The enzyme catalyses cytidine(34) in elongator tRNA(Met) + acetate + ATP = N(4)-acetylcytidine(34) in elongator tRNA(Met) + AMP + diphosphate. Its function is as follows. Catalyzes the formation of N(4)-acetylcytidine (ac(4)C) at the wobble position of elongator tRNA(Met), using acetate and ATP as substrates. First activates an acetate ion to form acetyladenylate (Ac-AMP) and then transfers the acetyl group to tRNA to form ac(4)C34. The protein is tRNA(Met) cytidine acetate ligase of Clostridium novyi (strain NT).